Reading from the N-terminus, the 96-residue chain is Co-chaperonin GroES (96 aa).

The protein belongs to the GroES chaperonin family. Heptamer of 7 subunits arranged in a ring. Interacts with the chaperonin GroEL.

It is found in the cytoplasm. Together with the chaperonin GroEL, plays an essential role in assisting protein folding. The GroEL-GroES system forms a nano-cage that allows encapsulation of the non-native substrate proteins and provides a physical environment optimized to promote and accelerate protein folding. GroES binds to the apical surface of the GroEL ring, thereby capping the opening of the GroEL channel. The polypeptide is Co-chaperonin GroES (Delftia acidovorans (strain DSM 14801 / SPH-1)).